The primary structure comprises 143 residues: Transcriptional regulator MraZ (143 aa).

2 consecutive SpoVT-AbrB domains span residues Glu-5 to Glu-47 and Ala-76 to Lys-119.

Belongs to the MraZ family. As to quaternary structure, forms oligomers.

Its subcellular location is the cytoplasm. The protein localises to the nucleoid. This chain is Transcriptional regulator MraZ, found in Natranaerobius thermophilus (strain ATCC BAA-1301 / DSM 18059 / JW/NM-WN-LF).